Consider the following 140-residue polypeptide: UPF0225 protein SAV_6631 (140 aa).

Residues M1 to C22 are disordered. Low complexity predominate over residues T10–P19.

It belongs to the UPF0225 family.

In Streptomyces avermitilis (strain ATCC 31267 / DSM 46492 / JCM 5070 / NBRC 14893 / NCIMB 12804 / NRRL 8165 / MA-4680), this protein is UPF0225 protein SAV_6631.